We begin with the raw amino-acid sequence, 376 residues long: MKTELTLLEQTLTLHRFPKRNNETLQAWDAGDEYLIQHVEQLALPESSHIVIINDHFGTLSCWFSQKHKVSMMSDSYIAHQATQANLQQNQRPPVQLLTTLDPVPNDASVVLLQLPKSNRHLVWILSQLRKALSPNIPIIAVNKAKEIHTSTLNLFEKHLGPTTTSLAWKKHRLVFSSATVNPANEVNPECGWSIEPYAITLTNLPNVYSGESLDLGSRFILEHLPADPTLEDFIDLGCGNGVLSVRLGQLNPQAKITCVDESFMAIASAQKNLHDNLGKRDIHCIANNCLDGFPAHSSSMIVCNPPFHQQQTITDHIAWQMFCDSKHVLKKGGKLWVIGNRHLGYDVKLARLFGKSHVRVIANNSKFVILQAIKS.

It belongs to the methyltransferase superfamily. RlmG family.

It localises to the cytoplasm. It catalyses the reaction guanosine(1835) in 23S rRNA + S-adenosyl-L-methionine = N(2)-methylguanosine(1835) in 23S rRNA + S-adenosyl-L-homocysteine + H(+). In terms of biological role, specifically methylates the guanine in position 1835 (m2G1835) of 23S rRNA. This chain is Ribosomal RNA large subunit methyltransferase G, found in Vibrio cholerae serotype O1 (strain ATCC 39541 / Classical Ogawa 395 / O395).